The sequence spans 1378 residues: Macrophage-stimulating protein receptor (1378 aa).

A signal peptide spans 1-23 (MGLPLPLLQSSLLLMLLLRLSAA). Topologically, residues 25–960 (TNLNWQCPRI…RSSPGRASQR (936 aa)) are extracellular. The Sema domain maps to 33-524 (RIPYAASRDF…SGDQVFKVPI (492 aa)). An N-linked (GlcNAc...) asparagine glycan is attached at asparagine 91. Cystine bridges form between cysteine 102/cysteine 105, cysteine 108/cysteine 163, cysteine 136/cysteine 144, cysteine 175/cysteine 178, cysteine 301/cysteine 368, cysteine 386/cysteine 409, and cysteine 387/cysteine 424. N-linked (GlcNAc...) asparagine glycans are attached at residues asparagine 391, asparagine 460, and asparagine 490. 4 cysteine pairs are disulfide-bonded: cysteine 529–cysteine 547, cysteine 535–cysteine 569, cysteine 538–cysteine 554, and cysteine 550–cysteine 560. 3 consecutive IPT/TIG domains span residues 571–673 (PEIS…FRVE), 686–769 (PVLT…FHYK), and 772–864 (PIVL…FRFL). N-linked (GlcNAc...) asparagine glycans are attached at residues asparagine 656, asparagine 722, asparagine 845, and asparagine 901. The chain crosses the membrane as a helical span at residues 961 to 981 (ILLIALLVLILLVAVLAVALI). The Cytoplasmic portion of the chain corresponds to 982–1378 (FNSRRRKKQL…RPLSEPPLPT (397 aa)). The segment at 1002 to 1026 (SDINDTASGAPNHEESSESRDGTSV) is disordered. The segment covering 1013-1022 (NHEESSESRD) has biased composition (basic and acidic residues). One can recognise a Protein kinase domain in the interval 1059–1322 (IHTDQVIGKG…ALVLEVKQVV (264 aa)). Residues 1065–1073 (IGKGHFGVV), lysine 1091, and 1138–1141 (LPYM) each bind ATP. Aspartate 1185 serves as the catalytic Proton acceptor. Arginine 1189 is an ATP binding site. Phosphotyrosine; by autocatalysis occurs at positions 1215, 1216, 1330, and 1337. Residues 1347–1378 (DGSVPPEQVQPSPQHCRSTSKPRPLSEPPLPT) are disordered. Residues 1349–1360 (SVPPEQVQPSPQ) show a composition bias toward low complexity.

Belongs to the protein kinase superfamily. Tyr protein kinase family. Heterodimer of an alpha chain and a beta chain which are disulfide linked. Binds PLXNB1. Associates with and is negatively regulated by HYAL2. Interacts when phosphorylated with downstream effectors including PIK3R1, PCLG1, GRB2 and GAB1. Interacts with integrin beta1/ITGB1 in a ligand-independent fashion. Isoform sf-Stk forms covalent heterodimers with friend spleen focus-forming virus (FSFFV) gp55. In terms of processing, proteolytic processing yields the two subunits. Autophosphorylated in response to ligand binding on Tyr-1215 and Tyr-1216 in the kinase domain leading to further phosphorylation of Tyr-1330 and Tyr-1337 in the C-terminal multifunctional docking site. Post-translationally, ubiquitinated. Ubiquitination by CBL regulates the receptor stability and activity through proteasomal degradation. In terms of processing, O-mannosylation of IPT/TIG domains on Thr or Ser residues by TMEM260 is required for protein maturation. O-mannosylated residues are composed of single mannose glycans that are not elongated or modified. As to expression, expressed in liver, skin, lung, brain, testis and kidney.

The protein localises to the membrane. It catalyses the reaction L-tyrosyl-[protein] + ATP = O-phospho-L-tyrosyl-[protein] + ADP + H(+). With respect to regulation, in its inactive state, the C-terminal tail interacts with the catalytic domain and inhibits the kinase activity. Upon ligand binding, the C-terminal tail is displaced and becomes phosphorylated, thus increasing the kinase activity. In terms of biological role, receptor tyrosine kinase that transduces signals from the extracellular matrix into the cytoplasm by binding to MST1 ligand. Regulates many physiological processes including cell survival, migration and differentiation. Ligand binding at the cell surface induces autophosphorylation of RON on its intracellular domain that provides docking sites for downstream signaling molecules. Following activation by ligand, interacts with the PI3-kinase subunit PIK3R1, PLCG1 or the adapter GAB1. Recruitment of these downstream effectors by RON leads to the activation of several signaling cascades including the RAS-ERK, PI3 kinase-AKT, or PLCgamma-PKC. RON signaling activates the wound healing response by promoting epithelial cell migration, proliferation as well as survival at the wound site. Also plays a role in the innate immune response by regulating the migration and phagocytic activity of macrophages. Alternatively, RON can also promote signals such as cell migration and proliferation in response to growth factors other than MST1 ligand. This is Macrophage-stimulating protein receptor (Mst1r) from Mus musculus (Mouse).